The following is a 213-amino-acid chain: Oxidase ustYa (213 aa).

The disordered stretch occupies residues 1–26 (MAERSSNGYKEVPVRQSEESTIAEEE). A helical transmembrane segment spans residues 48-68 (AVWFLIALLLLSNIGLLGGLI). N-linked (GlcNAc...) asparagine glycosylation occurs at asparagine 98. 2 consecutive short sequence motifs (HXXHC) follow at residues 123–127 (HQLHC) and 150–154 (HLMHC).

Belongs to the ustYa family.

The protein resides in the membrane. It functions in the pathway mycotoxin biosynthesis. Oxidase; part of the gene cluster that mediates the biosynthesis of the secondary metabolite ustiloxin B, an antimitotic tetrapeptide. First, ustA is processed by the subtilisin-like endoprotease Kex2 that is outside the ustiloxin B gene cluster, at the C-terminal side of Arg-Lys, after transfer to Golgi apparatus through the endoplasmic reticulum (ER). Cleavage by KEX2 generates 16 peptides YAIG-I to YAIG-XVI. To process the precursor peptide further, at least two peptidases are necessary to cleave the N-terminal and C-terminal sides of the Tyr-Ala-Ile-Gly core peptide which serves as backbone for the synthesis of ustiloxin B, through cyclization and modification of the tyrosine with a non-protein coding amino acid, norvaline. One of the two peptidases must be the serine peptidase ustP; and the other pepdidase is probably ustH. Macrocyclization of the core peptide derived from ustA requires the tyrosinase ustQ, as well as the homologous oxidases ustYa and ustYb, and leads to the production of the first cyclization product N-desmethylustiloxin F. For the formation of N-desmethylustiloxin F, three oxidation steps are required, hydroxylation at the benzylic position, hydroxylation at either the aromatic ring of Tyr or beta-position of Ile, and oxidative cyclization. UstQ may catalyze the oxidation of a phenol moiety, whereas the ustYa and ustYb are most likely responsible for the remaining two-step oxidations. N-desmethylustiloxin F is then methylated by ustM to yield ustiloxin F which in turn substrate of the cytochrome P450 monooxygenase ustC which catalyzes the formation of S-deoxyustiloxin H. The flavoprotein monooxygenases ustF1 and ustF2 then participate in the modification of the side chain of S-deoxyustiloxin H, leading to the synthesis of an oxime intermediate, via ustiloxin H. Finally, carboxylative dehydration performed by the cysteine desulfurase-like protein ustD yields ustiloxin B. This Aspergillus flavus (strain ATCC 200026 / FGSC A1120 / IAM 13836 / NRRL 3357 / JCM 12722 / SRRC 167) protein is Oxidase ustYa.